The sequence spans 247 residues: Transmembrane protein 33 (247 aa).

N-acetylalanine is present on alanine 2. Residues 2–31 (ADTTPNGPQGAGAVQFMMTNKLDTAMWLSR) are Lumenal-facing. The helical transmembrane segment at 32-52 (LFTVYCSALFVLPLLGLHEAA) threads the bilayer. The Cytoplasmic portion of the chain corresponds to 53–100 (SFYQRALLANALTSALRLHQRLPHFQLSRAFLAQALLEDSCHYLLYSL). The chain crosses the membrane as a helical span at residues 101 to 121 (IFVNSYPVTMSIFPVLLFSLL). The Lumenal portion of the chain corresponds to 122–155 (HAATYTKKVLDARGSNSLPLLRSVLDKLSANQQN). Residues 156–176 (ILKFIACNEIFLMPATVFMLF) form a helical membrane-spanning segment. Over 177–247 (SGQGSLLQPF…FISRLAPTVP (71 aa)) the chain is Cytoplasmic.

Belongs to the PER33/POM33 family. Interacts with EIF2AK3. Interacts with ARL6IP1, isoform RTN1-A of RTN1, isoform RTN2-B of RTN2, isoform 3 of RTN3 and isoform 3 of RTN4. Interacts with RNF5. Interacts with RNF26. Interacts with PKD2. As to expression, prostate cancer and several cancer cell lines (at protein level). Widely expressed. Expressed at higher levels in endocrine-resistant breast cancer cells as compared to endocrine-sensitive breast cancer cells. Expressed at higher levels in early recurrence breast cancer tissues as compared to non-recurrent breast tumors.

The protein localises to the endoplasmic reticulum membrane. It is found in the melanosome. It localises to the nucleus envelope. Functionally, acts as a regulator of the tubular endoplasmic reticulum (ER) network by modulating intracellular calcium homeostasis. Mechanistically, stimulates PKD2 calcium-dependent activity. Suppresses the RTN3/4-induced formation of the ER tubules. Positively regulates PERK-mediated and IRE1-mediated unfolded protein response signaling. Plays an essential role in VEGF-mediated release of Ca(2+) from ER stores during angiogenesis. Also plays a role in the modulation of innate immune signaling through the cGAS-STING pathway by interacting with RNF26. Participates in lipid metabolism by acting as a downstream effector of the pyruvate kinase/PKM. Forms a complex with RNF5 to facilitate polyubiquitination and subsequent degradation of SCAP on the ER membrane. The protein is Transmembrane protein 33 (TMEM33) of Homo sapiens (Human).